A 483-amino-acid polypeptide reads, in one-letter code: Regulatory protein ViaA (483 aa).

This sequence belongs to the ViaA family. Homodimer. Interacts with RavA.

The protein resides in the cytoplasm. In terms of biological role, component of the RavA-ViaA chaperone complex, which may act on the membrane to optimize the function of some of the respiratory chains. ViaA stimulates the ATPase activity of RavA. This is Regulatory protein ViaA from Escherichia coli O17:K52:H18 (strain UMN026 / ExPEC).